Here is a 935-residue protein sequence, read N- to C-terminus: MANRLQRGDRSRLLLLLCIFLGTLRGFRARQIRYSVPEETEKGSFVGNISKDLGLEPRELAKRGVRIVSRGKTQLFAVNPRSGSLITAGRIDREELCETVSSCFLNMELLVEDTLKIYGVEVEIIDINDNAPSFQEDEVEIKVSEHAIPGARFALPNARDPDVGVNSLQSYQLSPNNYFSLQLRGRTDGAKNPELVLEGSLDREKEAAHLLLLTALDGGDPIRKGAVPIRVVVLDVNDHIPMFTQSVYRVSVPENISSGTRVLMVNATDPDEGINGEVMYSFRNMESKASEIFQLDSQTGEVQVRGSLDFEKYRFYEMEIQGQDGGGLFTTTTMLITVVDVNDNAPEITITSSINSILENSPPGTVIALLNVQDQDSGENGQVSCFIPNHLPFKLEKTYGNYYKLITSRVLDRELVQSYNITLTATDQGSPPLSAETHVWLNVADDNDNPPVFPHSSYSAYIPENNPRGASIFSVTALDPDSKQNALVTYSLTDDTVQGVPLSSYVSINSNTGVLYALQSFDYEQFRDLELRVIARDSGDPPLSSNVSLSLFVLDQNDNAPEILYPALPTDGSTGVELAPRSAEPGYLVTKVVAVDKDSGQNAWLSYRLLKASEPGLFAVGEHTGEVRTARALLDRDALKQSLVVAVQDHGQPPLSATVTLTVAVADSIPEVLADLGSLESLANSETSDLSLYLVVAVAAVSCIFLVFVIVLLALRLWRWHKSRLLQASEGGLAGMPTSHFVGVDGVQAFLQTYSHEVSLIADSQKSHLIFPQPNYGDTLISQESCEKSEPLLIAEDSAIILGKCDPTSNQQAPPNTDWRFSQAQRPGTSGSQNGDDTGTWPNNQFDTEMLQAMILASASEAADGSSTLGGGAGTMGLSARYGPQFTLQHVPDYRQNVYIPGSNATLTNAAGKRDGKAPAGGNGNKKKSGKKEKK.

The signal sequence occupies residues M1–A29. 6 Cadherin domains span residues R30–F134, Q135–F243, T244–I348, T349–F453, P454–I563, and D571–G677. Over R30–Y693 the chain is Extracellular. N-linked (GlcNAc...) asparagine glycosylation is present at N48. N-linked (GlcNAc...) asparagine glycosylation is found at N255, N266, N420, and N546. The helical transmembrane segment at L694–A714 threads the bilayer. At L715–K935 the chain is on the cytoplasmic side. Disordered stretches follow at residues C805–N844 and A905–K935. A compositionally biased stretch (polar residues) spans P807 to N844. Positions N925–K935 are enriched in basic residues.

It localises to the cell membrane. Its function is as follows. Potential calcium-dependent cell-adhesion protein. May be involved in the establishment and maintenance of specific neuronal connections in the brain. The protein is Protocadherin gamma-A11 (PCDHGA11) of Homo sapiens (Human).